A 207-amino-acid polypeptide reads, in one-letter code: Redox-sensing transcriptional repressor Rex (207 aa).

The segment at residues 15-54 (LYYRCLNRLYEEGIEYVASKDIAERLGIKSSQVRKDLSYF) is a DNA-binding region (H-T-H motif). An NAD(+)-binding site is contributed by 89–94 (GAGNIG).

Belongs to the transcriptional regulatory Rex family. Homodimer.

The protein localises to the cytoplasm. In terms of biological role, modulates transcription in response to changes in cellular NADH/NAD(+) redox state. The sequence is that of Redox-sensing transcriptional repressor Rex from Thermosipho africanus (strain TCF52B).